A 578-amino-acid polypeptide reads, in one-letter code: Zinc finger protein with KRAB and SCAN domains 8 (578 aa).

The disordered stretch occupies residues 1–20; sequence MAEESRKPSAPSPPDQTPEE. The residue at position 12 (S12) is a Phosphoserine. K26 is covalently cross-linked (Glycyl lysine isopeptide (Lys-Gly) (interchain with G-Cter in SUMO2)). An SCAN box domain is found at 51 to 133; that stretch reads RLRFRQLCYQ…TLLEDLERQI (83 aa). The disordered stretch occupies residues 158–205; it reads ASAPEPPNTQLQSEATQHKSPVPQESQERSMSTSQSPTRSQKGSSGDQ. Over residues 165–205 the composition is skewed to polar residues; it reads NTQLQSEATQHKSPVPQESQERSMSTSQSPTRSQKGSSGDQ. Residues K176 and K199 each participate in a glycyl lysine isopeptide (Lys-Gly) (interchain with G-Cter in SUMO2) cross-link. Phosphoserine is present on S201. The KRAB domain occupies 220–316; sequence EKIEDMAVSL…GRLERQRGNP (97 aa). Glycyl lysine isopeptide (Lys-Gly) (interchain with G-Cter in SUMO2) cross-links involve residues K221, K272, and K288. C2H2-type zinc fingers lie at residues 322–344 and 350–372; these read HKCD…WRIH and YQCN…QDIH. Residues K374 and K376 each participate in a glycyl lysine isopeptide (Lys-Gly) (interchain with G-Cter in SUMO2) cross-link. 7 consecutive C2H2-type zinc fingers follow at residues 378–400, 406–428, 434–456, 462–484, 490–512, 518–540, and 546–568; these read YHCK…QRIH, YQCN…QRIH, YECN…QRIH, YECD…QRSH, YKCN…QRIH, and YKCK…LRIH. Glycyl lysine isopeptide (Lys-Gly) (interchain with G-Cter in SUMO2) cross-links involve residues K413 and K441. A Glycyl lysine isopeptide (Lys-Gly) (interchain with G-Cter in SUMO2) cross-link involves residue K502. A Glycyl lysine isopeptide (Lys-Gly) (interchain with G-Cter in SUMO2) cross-link involves residue K572.

This sequence belongs to the krueppel C2H2-type zinc-finger protein family.

Its subcellular location is the nucleus. In terms of biological role, may be involved in transcriptional regulation. The sequence is that of Zinc finger protein with KRAB and SCAN domains 8 (ZKSCAN8) from Pan paniscus (Pygmy chimpanzee).